The primary structure comprises 526 residues: pH-sensitive chloride channel 2 (526 aa).

Residues 1 to 18 (MDTLGIFVLISYLGLSSA) form the signal peptide. The Extracellular portion of the chain corresponds to 19-300 (AGVHLGDLQQ…VLLTREVGYY (282 aa)). Residues Asn33, Asn42, Asn52, Asn192, Asn231, Asn264, Asn271, and Asn283 are each glycosylated (N-linked (GlcNAc...) asparagine). The chain crosses the membrane as a helical span at residues 301-321 (VIDYFLPSIMIVTISWVSFWL). Topologically, residues 322–327 (QADQTP) are cytoplasmic. A helical transmembrane segment spans residues 328–347 (ARTTLGCTTLLSFITLSLSQ). At 348–360 (ENNLMKVSYVTMS) the chain is on the extracellular side. The helical transmembrane segment at 361–381 (EVWFLVCTIFIFGSLVEFAFV) threads the bilayer. The Cytoplasmic portion of the chain corresponds to 382–505 (NTIWRRNNDL…VSLWIDRKMR (124 aa)). The disordered stretch occupies residues 463–488 (ISLDEQDETSTSESSDSSKEKPAQTF). The chain crosses the membrane as a helical span at residues 506–526 (FVFPLSFIVFNALFWTLVYCL).

It belongs to the ligand-gated ion channel (TC 1.A.9) family. In third-instar larvae, expressed in the principal cells of the excretory Malpighian tubules (at protein level). Also detected in the enterocytes of the copper cell region and the iron cell region of the larval midgut (at protein level). In the copper cell region expression is confined to the interstitial cells and in the iron cell region it is expressed in the anterior portion (at protein level). Expressed in the Malpighian tubules and the middle midgut of third instar larvae and adults.

It localises to the apical cell membrane. The protein resides in the cell projection. Its subcellular location is the microvillus membrane. The protein localises to the late endosome membrane. It is found in the lysosome membrane. It catalyses the reaction chloride(in) = chloride(out). Functionally, ligand and pH-gated channel that mediates chloride transport primarily in the mid-gut and thereby functions in larval metabolism and fluid homeostasis. Channel opening is triggered by zinc binding or, to a lesser extent, an increase in extracellular pH. Zinc-dependent activity in the mid-gut is required for modulating Tor-dependent metabolic programs that promote larval feeding and systematic growth. It may therefore act as an intestinal zinc sensor that mediates larval growth and metabolism in response to micronutrient availability. Activates Tor signaling via its activity in maintaining lysosome homeostasis in interstitial cells and/or by its role in activating the release of insulin-like peptides in the brain after feeding, via an unknown mechanism. Functions in lysosome homeostasis by regulating chloride transport into enterocyte lysosomes to sustain V-ATPase function which maintains lysosomal acidification and consequently promotes Tor activation at the lysosome membrane. Also appears to play a role in regulating fluid secretion and osmotic homeostasis in Malpighian tubules in response to the pH of extracellular urine. This function is important for proper urine production during diuresis. The protein is pH-sensitive chloride channel 2 of Drosophila melanogaster (Fruit fly).